A 329-amino-acid polypeptide reads, in one-letter code: Arylacetonitrilase (329 aa).

Residues 6–279 (VRVAVTQAEP…EGIVYANLDM (274 aa)) form the CN hydrolase domain. Glu-46 serves as the catalytic Proton acceptor. Residue Lys-126 is part of the active site. Cys-161 functions as the Nucleophile in the catalytic mechanism.

The protein belongs to the carbon-nitrogen hydrolase superfamily. Nitrilase family.

It catalyses the reaction a nitrile + 2 H2O = a carboxylate + NH4(+). It carries out the reaction 4-chlorophenylacetonitrile + 2 H2O = 4-chlorophenylacetate + NH4(+). Its function is as follows. Nitrilase that hydrolyzes preferentially phenylacetonitrile and heteroaromatic nitriles, but has significantly lower activity for (R,S)-mandelonitrile. Also acts on dinitriles like phenylenediacetonitriles (PDAs) 1,2-PDA, 1,3-PDA, and 1,4-PDA, and cyanophenyl acetonitriles (CPAs) 2-CPA and 4-CPA. The sequence is that of Arylacetonitrilase from Hypocrea virens (strain Gv29-8 / FGSC 10586) (Gliocladium virens).